The sequence spans 278 residues: uncharacterized protein (278 aa).

The N-terminal stretch at 1 to 20 (MSPLIVGTLIIILLSGLATA) is a signal peptide. The GPI-anchor amidated glycine moiety is linked to residue glycine 96. A propeptide spans 97-278 (TFLTSPTAKR…QLIMQTFNGS (182 aa)) (removed in mature form).

It localises to the cell membrane. This is an uncharacterized protein from Schizosaccharomyces pombe (strain 972 / ATCC 24843) (Fission yeast).